We begin with the raw amino-acid sequence, 258 residues long: F-box/SPRY domain-containing protein 1 (258 aa).

One can recognise an F-box domain in the interval 6–54 (TEYAPDIPDNVLELIFSYLKLQDLRNCALVCKSWHRFLSDENNEVWRAQ). The region spanning 64-256 (FKTDLLSVVP…ISMVYLGPPL (193 aa)) is the B30.2/SPRY domain.

It belongs to the FBXO45/Fsn family. In terms of assembly, component of an E3 ubiquitin ligase complex composed of hiw and Fsn.

The protein localises to the synapse. Its pathway is protein modification; protein ubiquitination. In terms of biological role, required in the presynaptic motoneuron to down-regulate the levels of wnd and restrain synaptic terminal growth at the neuromuscular junction (NMJ). The protein is F-box/SPRY domain-containing protein 1 of Culex quinquefasciatus (Southern house mosquito).